The following is an 85-amino-acid chain: Phosphocarrier protein HPr (85 aa).

The 85-residue stretch at 1–85 (MFQRDIKITT…DLAKFLTTLK (85 aa)) folds into the HPr domain. Residue histidine 15 is the Pros-phosphohistidine intermediate of the active site.

The protein belongs to the HPr family.

It localises to the cytoplasm. Its function is as follows. General (non sugar-specific) component of the phosphoenolpyruvate-dependent sugar phosphotransferase system (sugar PTS). This major carbohydrate active-transport system catalyzes the phosphorylation of incoming sugar substrates concomitantly with their translocation across the cell membrane. The phosphoryl group from phosphoenolpyruvate (PEP) is transferred to the phosphoryl carrier protein HPr by enzyme I. Phospho-HPr then transfers it to the PTS EIIA domain. The protein is Phosphocarrier protein HPr (ptsH) of Buchnera aphidicola subsp. Baizongia pistaciae (strain Bp).